Here is a 649-residue protein sequence, read N- to C-terminus: Microtubule-associated protein VP6 (649 aa).

Its subcellular location is the virion. It is found in the host cytoplasm. It localises to the host cytoskeleton. Its function is as follows. Minor inner capsid component. Displays NTPase and RNA 5'-triphosphatase (RTPase) activities. May function as a cofactor of polymerase VP2. Associates with microtubules and plays a role in the formation, structural organization and morphology of viral inclusions, where the assembly of cores and the replication of viral RNA occur. The protein is Microtubule-associated protein VP6 (S6) of Cryphonectria parasitica (Chestnut blight fungus).